The chain runs to 334 residues: Formamidase (334 aa).

In terms of domain architecture, CN hydrolase spans 14 to 260 (FLVAAIQFPV…WEIVTGEIYP (247 aa)). E60 functions as the Proton acceptor in the catalytic mechanism. K133 functions as the Proton donor in the catalytic mechanism. Catalysis depends on C166, which acts as the Nucleophile.

This sequence belongs to the carbon-nitrogen hydrolase superfamily. Aliphatic amidase family. As to quaternary structure, homotetramer.

It catalyses the reaction formamide + H2O = formate + NH4(+). Its activity is regulated as follows. Inhibited by iodoacetate. Appears to be regulated by the fur protein, but this effect is not mediated at the transcriptional level. In terms of biological role, is an aliphatic amidase with a restricted substrate specificity, as it only hydrolyzes formamide. Probably involved in the nitrogen metabolism of H.pylori. The chain is Formamidase (amiF) from Helicobacter pylori (strain ATCC 700392 / 26695) (Campylobacter pylori).